A 1341-amino-acid chain; its full sequence is MATLKQIQFKRSKTAGARPAASVLAEGELAINLKDRTIFTKDDSGNIIDLSISAGGNISGNITQTGDYTQTGKFNLIGPQIVASGGYIEFNYRTTGSGAWSGQHTAKAPIFVDLSSATSTSEYNPIIKQRFKDGTFSLGTLVSEGSLKIHYINESGDSKYWTFRRDGGFTVDGGGLGVSGGSITTSGNIAALGNITSPQINTKNIILDTKAFGQYDSQSLVQYVYPGTGEENGINYLRKVRAKSGGTIYHEIASAQTGKNDEISWWTGNTLTTKLMGLRNDGAMVLRRSLAIGTITADENTNNYGSPTPMGERYIALGDAATGLKYIKQGVYDLVGNWNSVASITPDSFRSTRKALFGRSEDQGGTWTMPGTNAALLSVQTQADVNNAGDGQTHIGYNSGGKMSHYFRGKGQTNINTQKGMEVNPGILKLVTDSNNVQFYANGTVSSIQRIKFDNGLVLTGARPDGIQLDAPTAADGTKTILWAGGTRAGQNKSYVSIKAWGNSFNASGDRARETVFEVGDGQGFHFYSQRVAPAPGSTVGPIQLRVNGGLLTAGSIVASGSITTESSLNVNNGLSVNGQAKFGGTANALRIWNAEYGVIFRRSESNFYIIPTNQNEGESGDIHSSLRPVRIGLNDGAVGLGRDSFIVDQNNALTTINSNSRINANFRMQLGQSTYIDAECTDTVRPAGAGSFVSQNNENVRAPFYMNINRTDTSTYVPILKQRYVQGNSCYSLGTLISTGDFRIHYHEGGDNGSTGPQKADLAWQFRRDGSFRSPNKIEINAVTIGTDGNITGGTGNFANLNTTLNRKTTVGGWAGSSVVGWYKFATVTIPQSTGTVTFKISGGAGFNFKSYNQASIAEIVLRTGNNPKGINAVLWNRSDLSFNQIATMNTSDDTYDVYVFCEGYTNALIVEYSCSENSSVTVVGLNGGIQPVVDALPEGHVVGKTVRLLNNIGGTFAAGESDIVTRGEYVADNQKGMRIKSNGNNIGSNAAILRNDGGSFYILATDKNTAEKSDAANGDWNGLRPFAINMADGRVGMNHGLNITGGGLNVTGGLNVTSGNTSLGNISSRVVARWRGASGWADNSDTMKSKITFMADHGDLSNSDSYYPIVGAYSNYGSAGYRQTFEFGWVGSGTTAGWRDGIIRIRGDNANGQQARWRFTMDGTLDCPGKVLLPQTGAFGVNTSNGLGGNSITFGDSDTGIKQNGDGLLDIYANSVQVFRFQNGDLYSYKNINAPNVYIRSDIRLKSNFKPIENALDKVEKLNGVIYDKAEYIGGEAIETEAGIVAQTLQDVLPEAVRETEDSKGNKILTVSSQAQIALLVEAVKTLSARVKELESKLM.

The interval 1238 to 1241 (NVYI) is interaction with the receptor-recognizing protein gp38. In terms of domain architecture, Peptidase S74 spans 1243–1340 (SDIRLKSNFK…ARVKELESKL (98 aa)).

The protein belongs to the S16-like long tail fiber protein Gp37 family. In terms of assembly, homotrimer. Interacts with the receptor-recognizing protein Gp38. Proteolytic cleavage and release of the chaperone in the host cytosol stabilizes the folded protein.

The protein resides in the virion. In terms of biological role, constitues the trimeric tip of the long tail fiber that mediates the attachment to the host receptor, together with the receptor-recognizing protein Gp38. Its function is as follows. The C-terminal chaperone protein mediates homotrimerization and proper folding of the catalytic trimer. This is Long tail fiber protein Gp37 (37) from Escherichia coli (Bacteriophage T2).